A 245-amino-acid polypeptide reads, in one-letter code: Terpene cyclase prhH (245 aa).

A run of 7 helical transmembrane segments spans residues 17-37, 51-71, 76-96, 113-133, 138-158, 170-190, and 205-225; these read ILAI…VNYI, IGIL…WMFP, HWQG…LVTL, IVFI…ALAA, ALGF…CGIA, SYLI…KLCI, and PMCW…PFLY.

This sequence belongs to the paxB family.

The protein resides in the membrane. It functions in the pathway secondary metabolite biosynthesis; terpenoid biosynthesis. In terms of biological role, terpene cyclase; part of the gene cluster that mediates the biosynthesis of paraherquonin, a meroterpenoid with a unique, highly congested hexacyclic molecular architecture. The first step of the pathway is the synthesis of 3,5-dimethylorsellinic acid (DMOA) by the polyketide synthase prhL. Synthesis of DMOA is followed by farnesylation by the prenyltransferase prhE, methylesterification by the methyl-transferase prhM, epoxidation of the prenyl chain by the flavin-dependent monooxygenase prhF, and cyclization of the farnesyl moiety by the terpene cyclase prhH, to yield the tetracyclic intermediate, protoaustinoid A. The short chain dehydrogenase prhI then oxidizes the C-3 alcohol group of the terpene cyclase product to transform protoaustinoid A into protoaustinoid B. The FAD-binding monooxygenase prhJ catalyzes the oxidation of protoaustinoid B into preaustinoid A which is further oxidized into preaustinoid A1 by FAD-binding monooxygenase phrK. Finally, prhA leads to berkeleydione via the berkeleyone B intermediate. PrhA is a multifunctional dioxygenase that first desaturates at C5-C6 to form berkeleyone B, followed by rearrangement of the A/B-ring to form the cycloheptadiene moiety in berkeleydione. Berkeleydione serves as the key intermediate for the biosynthesis of paraherquonin as well as many other meroterpenoids. The cytochrome P450 monooxygenases prhB, prhD, and prhN, as well as the isomerase prhC, are probably involved in the late stage of paraherquonin biosynthesis, after the production of berkeleydione. Especially prhC might be a multifunctional enzyme that catalyzes the D-ring expansion via intramolecular methoxy rearrangement, as well as the hydrolysis of the expanded D-ring. This is Terpene cyclase prhH from Penicillium brasilianum.